The chain runs to 295 residues: Bifunctional protein FolD 1 (295 aa).

NADP(+) contacts are provided by residues 165 to 167, isoleucine 190, and isoleucine 231; that span reads GKS.

Belongs to the tetrahydrofolate dehydrogenase/cyclohydrolase family. As to quaternary structure, homodimer.

The catalysed reaction is (6R)-5,10-methylene-5,6,7,8-tetrahydrofolate + NADP(+) = (6R)-5,10-methenyltetrahydrofolate + NADPH. The enzyme catalyses (6R)-5,10-methenyltetrahydrofolate + H2O = (6R)-10-formyltetrahydrofolate + H(+). The protein operates within one-carbon metabolism; tetrahydrofolate interconversion. Its function is as follows. Catalyzes the oxidation of 5,10-methylenetetrahydrofolate to 5,10-methenyltetrahydrofolate and then the hydrolysis of 5,10-methenyltetrahydrofolate to 10-formyltetrahydrofolate. In Rhizorhabdus wittichii (strain DSM 6014 / CCUG 31198 / JCM 15750 / NBRC 105917 / EY 4224 / RW1) (Sphingomonas wittichii), this protein is Bifunctional protein FolD 1.